The primary structure comprises 848 residues: ATP-dependent Clp protease ATP-binding subunit ClpC1 (848 aa).

Residues 2-144 enclose the Clp R domain; sequence FERFTDRARR…RQQVIQLLSG (143 aa). Repeat regions lie at residues 5-70 and 80-144; these read FTDR…IGQG and FTPR…LLSG. A UVR domain is found at 425-460; the sequence is DEKIADARREKESAIDAQDFEKAAALRDKEKQLVAQ. Residues 553–560 and 617–626 each bind ATP; these read GPSGVGKT and KPFSVVLFDE. The interval 811-848 is disordered; it reads GQGEDAKFTFSGGPKRAETAEPDLAGAGAAGAPTAGTE. The span at 835–848 shows a compositional bias: low complexity; it reads AGAGAAGAPTAGTE.

The protein belongs to the ClpA/ClpB family. ClpC subfamily.

Functionally, ATP-dependent specificity component of the Clp protease. It directs the protease to specific substrates. Can perform chaperone functions in the absence of ClpP. Degrades anti-sigma-E factor RseA in the presence of ClpP2. The sequence is that of ATP-dependent Clp protease ATP-binding subunit ClpC1 (clpC1) from Mycolicibacterium smegmatis (strain ATCC 700084 / mc(2)155) (Mycobacterium smegmatis).